The following is a 435-amino-acid chain: Manganese transport system membrane protein MntC (435 aa).

9 helical membrane passes run 17–37 (VLAGTLLLGTASGVLGSFVLL), 42–62 (LIGDAMAHSALPGVCLAFLFT), 68–88 (PFFLLGAALAGLLGTFCIQLI), 98–118 (SAIGIVLSVFFGVGIILLTYI), 143–163 (QDIILIAGISAVLLLLCIVFF), 166–186 (FTLITFDLAFAKGLGIPVRFL), 189–209 (LLACLIVCAVVIGLQTVGVIL), 228–248 (LTGMIIIAGITGGVSGVAGTL), and 255–275 (GMATGPLMILSATLLFLFSMI).

Belongs to the ABC-3 integral membrane protein family. As to quaternary structure, the complex is probably composed of two ATP-binding proteins (MntB), two transmembrane proteins (MntC and MntD) and a solute-binding protein (MntA).

The protein resides in the cell membrane. Functionally, probably part of the ABC transporter complex MntABCD involved in manganese import. Probably responsible for the translocation of the substrate across the membrane. In Bacillus subtilis (strain 168), this protein is Manganese transport system membrane protein MntC.